The primary structure comprises 398 residues: Nicotinate phosphoribosyltransferase (398 aa).

Residue His-214 is modified to Phosphohistidine; by autocatalysis.

It belongs to the NAPRTase family. Transiently phosphorylated on a His residue during the reaction cycle. Phosphorylation strongly increases the affinity for substrates and increases the rate of nicotinate D-ribonucleotide production. Dephosphorylation regenerates the low-affinity form of the enzyme, leading to product release.

The enzyme catalyses nicotinate + 5-phospho-alpha-D-ribose 1-diphosphate + ATP + H2O = nicotinate beta-D-ribonucleotide + ADP + phosphate + diphosphate. It functions in the pathway cofactor biosynthesis; NAD(+) biosynthesis; nicotinate D-ribonucleotide from nicotinate: step 1/1. In terms of biological role, catalyzes the synthesis of beta-nicotinate D-ribonucleotide from nicotinate and 5-phospho-D-ribose 1-phosphate at the expense of ATP. The protein is Nicotinate phosphoribosyltransferase of Xanthomonas campestris pv. campestris (strain 8004).